The following is a 234-amino-acid chain: MELVYEGKAKRVYKHGDFYIMEFKDEVTAGDGAVKAQAPGKGALTAELSALLFKYLSRVVETHFVEYKPPNALAVIPAEVIPVEVIVRFKAYGSQLRRMPRLRELQHLSRPLVEFHYKDDALHDPLVYPQEVVEAGLAAPQEVEAIEEMAVRAASALRDLYARAGCDFIDVKFEFGRRGGRLILVDEVSGDTFRLLCRGEHLDKEYFRKTKDVNGLIERYRDLLQITKETFTRI.

This sequence belongs to the SAICAR synthetase family.

It catalyses the reaction 5-amino-1-(5-phospho-D-ribosyl)imidazole-4-carboxylate + L-aspartate + ATP = (2S)-2-[5-amino-1-(5-phospho-beta-D-ribosyl)imidazole-4-carboxamido]succinate + ADP + phosphate + 2 H(+). It functions in the pathway purine metabolism; IMP biosynthesis via de novo pathway; 5-amino-1-(5-phospho-D-ribosyl)imidazole-4-carboxamide from 5-amino-1-(5-phospho-D-ribosyl)imidazole-4-carboxylate: step 1/2. This is Phosphoribosylaminoimidazole-succinocarboxamide synthase from Pyrobaculum aerophilum (strain ATCC 51768 / DSM 7523 / JCM 9630 / CIP 104966 / NBRC 100827 / IM2).